A 122-amino-acid polypeptide reads, in one-letter code: Cytochrome c3 hydrogenase large chain (122 aa).

Fe cation is required as a cofactor.

The catalysed reaction is 2 Fe(III)-[cytochrome c3] + H2 = 2 Fe(II)-[cytochrome c3] + 2 H(+). In Acidithiobacillus ferrooxidans (Thiobacillus ferrooxidans), this protein is Cytochrome c3 hydrogenase large chain (hoxG).